Reading from the N-terminus, the 263-residue chain is Trem-like transcript 4 protein (263 aa).

Residues 1-28 form the signal peptide; the sequence is MAWRYSQLLLVPVQLVFLASVCCPGVWG. Residues 29-132 enclose the Ig-like V-type domain; sequence STVSEELHRM…LREVTVLRNI (104 aa). The Extracellular portion of the chain corresponds to 29–200; the sequence is STVSEELHRM…GWTSPGLLVS (172 aa). Cysteines 47 and 116 form a disulfide. N100 carries an N-linked (GlcNAc...) asparagine glycan. Positions 168–191 are disordered; sequence SPEETTDSSINGTGHRNQSSSSPG. The helical transmembrane segment at 201–221 threads the bilayer; sequence VQYGLLLLKALMLSVFCVLLC. Topologically, residues 222–263 are cytoplasmic; it reads WRSGQGREYMAETMELSKLPHISKSLDTVSHISGYEKKANWY.

As to quaternary structure, interacts with TYROBP/DAP12. In terms of tissue distribution, predominantly expressed in spleen, with highest levels on selected populations of macrophages, including red pulp macrophages, and on subsets of dendritic cells (DC), mostly on CD8alpha(+) DC (at protein level). Also expressed on blood and spleen Ly6C(low) monocytes (at protein level). Not expressed on lymphocytes or granulocytes (at protein level).

It localises to the cell membrane. Functionally, positively regulates Toll-like receptor signaling via TLR7, TLR9 and TLR13 in neutrophils and splenic macrophages. Regulates TLR7 signaling by controlling ligand-induced recruitment of TLR7 from the endoplasmic reticulum to endosomes and lysosomes. Positively regulates Toll-like receptor TLR9-induced production of inflammatory cytokines but is dispensable for IFNB1 production. Involved in the anti-viral response to several viruses including influenza virus, vesicular stomatitis virus and cytomegalovirus. Binds to late apoptotic, and necrotic cells, but not living or early apoptotic cells, but is not essential for uptake of dying cells by dendritic cells (DCs). Does not bind nucleic acids. May participate in antigen presentation. In Mus musculus (Mouse), this protein is Trem-like transcript 4 protein (Treml4).